The following is a 162-amino-acid chain: 6,7-dimethyl-8-ribityllumazine synthase (162 aa).

5-amino-6-(D-ribitylamino)uracil contacts are provided by residues F22, T56–E58, and A80–I82. G85 to T86 contributes to the (2S)-2-hydroxy-3-oxobutyl phosphate binding site. The active-site Proton donor is H88. M113 contacts 5-amino-6-(D-ribitylamino)uracil. Residue R127 participates in (2S)-2-hydroxy-3-oxobutyl phosphate binding.

The protein belongs to the DMRL synthase family.

It catalyses the reaction (2S)-2-hydroxy-3-oxobutyl phosphate + 5-amino-6-(D-ribitylamino)uracil = 6,7-dimethyl-8-(1-D-ribityl)lumazine + phosphate + 2 H2O + H(+). Its pathway is cofactor biosynthesis; riboflavin biosynthesis; riboflavin from 2-hydroxy-3-oxobutyl phosphate and 5-amino-6-(D-ribitylamino)uracil: step 1/2. In terms of biological role, catalyzes the formation of 6,7-dimethyl-8-ribityllumazine by condensation of 5-amino-6-(D-ribitylamino)uracil with 3,4-dihydroxy-2-butanone 4-phosphate. This is the penultimate step in the biosynthesis of riboflavin. This chain is 6,7-dimethyl-8-ribityllumazine synthase, found in Anaeromyxobacter dehalogenans (strain 2CP-C).